Consider the following 396-residue polypeptide: L-lactate dehydrogenase (396 aa).

The FMN hydroxy acid dehydrogenase domain occupies 1-380; sequence MIISAASDYR…SGDSLVQELG (380 aa). Substrate is bound at residue tyrosine 24. FMN-binding residues include serine 106 and glutamine 127. Residue tyrosine 129 coordinates substrate. Threonine 155 is an FMN binding site. Arginine 164 contacts substrate. Position 251 (lysine 251) interacts with FMN. The active-site Proton acceptor is histidine 275. Position 278 (arginine 278) interacts with substrate. 306–330 provides a ligand contact to FMN; it reads DSGIRNGLDVVRMIALGADTVLLGR.

It belongs to the FMN-dependent alpha-hydroxy acid dehydrogenase family. It depends on FMN as a cofactor.

Its subcellular location is the cell inner membrane. The enzyme catalyses (S)-lactate + A = pyruvate + AH2. In terms of biological role, catalyzes the conversion of L-lactate to pyruvate. Is coupled to the respiratory chain. The sequence is that of L-lactate dehydrogenase from Salmonella schwarzengrund (strain CVM19633).